Consider the following 424-residue polypeptide: Ubiquitin carboxyl-terminal hydrolase 12/46 homolog (424 aa).

One can recognise a USP domain in the interval 24–421 (FGLVNFGNTC…TGYILFYQSR (398 aa)). Residue Cys33 is the Nucleophile of the active site. The disordered stretch occupies residues 131-189 (NAGPSNGNPKATNQGGSTSAMASSIASKSSSTSNSNSNSNSTTNSNGNSSNSTGSLNAN). Over residues 133–144 (GPSNGNPKATNQ) the composition is skewed to polar residues. The segment covering 145–189 (GGSTSAMASSIASKSSSTSNSNSNSNSTTNSNGNSSNSTGSLNAN) has biased composition (low complexity). Residue His369 is the Proton acceptor of the active site.

The protein belongs to the peptidase C19 family. In terms of assembly, catalytic component of the Usp12-46 deubiquitylase complex consisting of Usp12-46, Wdr20 and Uaf1. The Usp12-46 deubiquitylase complex associates with arr/arrow; the interaction leads to deubiquitination and stabilization of arr/arrow.

The catalysed reaction is Thiol-dependent hydrolysis of ester, thioester, amide, peptide and isopeptide bonds formed by the C-terminal Gly of ubiquitin (a 76-residue protein attached to proteins as an intracellular targeting signal).. In terms of biological role, catalytic component of the Usp12-46 deubiquitylase complex. Deubiquitylates the wg/wingless-signaling receptor arr/arrow, which stabilizes the receptor and increases its concentration at the cell surface; this enhances the sensitivity of cells to wg/wingless-signal stimulation. This increases the amplitude and spatial range of the signaling response to the wg/wingless morphogen gradient, facilitating the precise, concentration-dependent regulation of its target genes. Required for wg/wingless-mediated signaling in the wing imaginal disc and for wg/wingless-dependent regulation of adult intestinal stem cell proliferation. Negative regulator of Notch signaling, possibly by regulating lysosomal degradation of N/Notch and affecting cell surface receptor levels; this may be context and cell-type specific function involved in external sensory organ development but not in wing imaginal-disc dorsoventral boundary signaling. Protects against HTT/huntingtin-induced polyglutamine expansion-dependent neurodegeneration. In Drosophila melanogaster (Fruit fly), this protein is Ubiquitin carboxyl-terminal hydrolase 12/46 homolog.